We begin with the raw amino-acid sequence, 320 residues long: Citrate synthase (320 aa).

Active-site residues include H249 and D307.

The protein belongs to the citrate synthase family.

The catalysed reaction is oxaloacetate + acetyl-CoA + H2O = citrate + CoA + H(+). It functions in the pathway carbohydrate metabolism; tricarboxylic acid cycle; isocitrate from oxaloacetate: step 1/2. In Bartonella doshiae, this protein is Citrate synthase (gltA).